Consider the following 297-residue polypeptide: Transmembrane protein 169 (297 aa).

The interval 1-84 (MEEPALVEGQ…PKEEEGDDFI (84 aa)) is disordered. At 1–159 (MEEPALVEGQ…CQLGADRGPH (159 aa)) the chain is on the extracellular side. Residues 9 to 18 (GQSQLPSPHH) show a composition bias toward polar residues. Acidic residues predominate over residues 60–84 (ETLDEEPGESEGGDQPKEEEGDDFI). The chain crosses the membrane as a helical span at residues 160–180 (VVLWTLVCLPVVFLLSFVVSF). Topologically, residues 181-210 (YYGTITWYNIFLVYNEERTFWHKISCCPCL) are cytoplasmic. Residues 211-231 (ILCYPVLIMAMASSLGLYAAV) traverse the membrane as a helical segment. The Extracellular portion of the chain corresponds to 232–297 (VQLSWSWEAW…ATQEIETSAV (66 aa)).

It is found in the membrane. This chain is Transmembrane protein 169 (TMEM169), found in Bos taurus (Bovine).